A 137-amino-acid polypeptide reads, in one-letter code: MRILGLDVGTKTVGVAISDEMGWTAQGLETIKINEEREIFGFDRVSELVKQYNVDKIVVGLPKNMNGTIGPRGEACQRYAESLRELLQLEVILWDERLSTMAAERLLISADVSRKKRKQVVDKMAAVVILQGYLDSK.

The protein belongs to the YqgF nuclease family.

The protein resides in the cytoplasm. In terms of biological role, could be a nuclease involved in processing of the 5'-end of pre-16S rRNA. The polypeptide is Putative pre-16S rRNA nuclease (Bacillus cytotoxicus (strain DSM 22905 / CIP 110041 / 391-98 / NVH 391-98)).